Consider the following 1462-residue polypeptide: uncharacterized protein (1462 aa).

Residues 119-139 form a helical membrane-spanning segment; that stretch reads TGYITSLCLSAILKFFSFRII. A phosphoserine mark is found at Ser-411 and Ser-420. The SEC7 domain occupies 541-730; it reads TLIESKKRKA…SEIYKAIKEN (190 aa). An HEAT repeat occupies 1102–1139; that stretch reads ENSEDWGLFSKLCNLLNDKNIVVRNQSLSLFHQLVNKY.

Its subcellular location is the cytoplasm. It is found in the golgi apparatus membrane. This is an uncharacterized protein from Schizosaccharomyces pombe (strain 972 / ATCC 24843) (Fission yeast).